Reading from the N-terminus, the 415-residue chain is E3 ubiquitin-protein ligase RNF135 (415 aa).

The segment at 21–67 (CIICQGLLDWPTTLPCGHSFCLQCLKDLWVSKRAGVDSCPWACPICR) adopts an RING-type zinc-finger fold. Residues 181–206 (TFSASQKKIQEILRDLEKIQETLQGS) adopt a coiled-coil conformation. One can recognise a B30.2/SPRY domain in the interval 228–415 (PDQRYPVSRK…LTPGNYLEIL (188 aa)).

As to quaternary structure, homodimer. Interacts (homodimer) with RIGI (double-stranded RNA-bound oligomeric form); involved in both RIGI ubiquitination, oligomerization into filaments associated with viral RNAs and the bridging of these filaments. Interacts with UBE2D3 and UBE2N; E2 ubiquitin ligases involved in RNF135-mediated ubiquitination of RIGI and activation of the RIG-I signaling pathway. Interacts with PCBP2.

The protein localises to the cytoplasm. Its subcellular location is the stress granule. The enzyme catalyses S-ubiquitinyl-[E2 ubiquitin-conjugating enzyme]-L-cysteine + [acceptor protein]-L-lysine = [E2 ubiquitin-conjugating enzyme]-L-cysteine + N(6)-ubiquitinyl-[acceptor protein]-L-lysine.. It participates in protein modification; protein ubiquitination. Its function is as follows. E2-dependent E3 ubiquitin-protein ligase that functions as a RIGI coreceptor in the sensing of viral RNAs in cell cytoplasm and the activation of the antiviral innate immune response. Together with the UBE2D3, UBE2N and UB2V1 E2 ligases, catalyzes the 'Lys-63'-linked polyubiquitination of RIGI oligomerized on viral RNAs, an essential step in the activation of the RIG-I signaling pathway. Through a ubiquitin-independent parallel mechanism, which consists in bridging RIGI filaments forming on longer viral RNAs, further activates the RIG-I signaling pathway. This second mechanism that synergizes with the ubiquitin-dependent one would thereby allow an RNA length-dependent regulation of the RIG-I signaling pathway. Associated with the E2 ligase UBE2N, also constitutively synthesizes unanchored 'Lys-63'-linked polyubiquitin chains that may also activate the RIG-I signaling pathway. The protein is E3 ubiquitin-protein ligase RNF135 of Rattus norvegicus (Rat).